Reading from the N-terminus, the 352-residue chain is tRNA N6-adenosine threonylcarbamoyltransferase (352 aa).

Residues His-111 and His-115 each coordinate Fe cation. Residues 133-137 (LASGG), Asp-166, Gly-179, and Asn-275 each bind substrate. Asp-300 contacts Fe cation.

This sequence belongs to the KAE1 / TsaD family. Requires Fe(2+) as cofactor.

It localises to the cytoplasm. It carries out the reaction L-threonylcarbamoyladenylate + adenosine(37) in tRNA = N(6)-L-threonylcarbamoyladenosine(37) in tRNA + AMP + H(+). In terms of biological role, required for the formation of a threonylcarbamoyl group on adenosine at position 37 (t(6)A37) in tRNAs that read codons beginning with adenine. Is involved in the transfer of the threonylcarbamoyl moiety of threonylcarbamoyl-AMP (TC-AMP) to the N6 group of A37, together with TsaE and TsaB. TsaD likely plays a direct catalytic role in this reaction. This chain is tRNA N6-adenosine threonylcarbamoyltransferase, found in Treponema pallidum (strain Nichols).